Reading from the N-terminus, the 824-residue chain is Type IV secretion system protein PtlC (824 aa).

456-463 contacts ATP; sequence GQSGSGKT.

This sequence belongs to the TrbE/VirB4 family.

It localises to the cell membrane. Its function is as follows. Component of the type IV secretion system ptl essential for secretion of assembled pertussis toxin (PTX) through the outer membrane. This is Type IV secretion system protein PtlC (ptlC) from Bordetella pertussis (strain Tohama I / ATCC BAA-589 / NCTC 13251).